Here is a 717-residue protein sequence, read N- to C-terminus: Coupling protein TraD (717 aa).

Over 1 to 27 (MSFNAKDMTQGGQIASMRIRMFSQIAN) the chain is Cytoplasmic. Residues 28-47 (IMLYCLFIFFWILVGLVLWI) traverse the membrane as a helical segment. Over 48-104 (KISWQTFVNGCIYWWCTTLEGMRDLIKSQPVYEIQYYGKTFRMNAAQVLHDKYMIWC) the chain is Periplasmic. The helical transmembrane segment at 105-130 (SEQLWSAFVLAAVVALVICLITFFVV) threads the bilayer. Topologically, residues 131–717 (SWILGRQGKQ…GEDVEPGDDF (587 aa)) are cytoplasmic. 192-199 (GTVGAGKS) lines the ATP pocket. 2 disordered regions span residues 614 to 639 (EDVTQAEQPQQPVSPAINDKKSDSGV) and 650 to 669 (LKMKPEEEMEQQLPPGISES).

This sequence belongs to the TrwB coupling protein family. As to quaternary structure, interacts with relaxosome component TraM. May form a hexamer in the membrane.

It is found in the cell inner membrane. Its function is as follows. Conjugative DNA transfer (CDT) is the unidirectional transfer of ssDNA plasmid from a donor to a recipient cell. It is the central mechanism by which antibiotic resistance and virulence factors are propagated in bacterial populations. Couples the transferosome to a type IV secretion system. Probably forms a pore through which single-stranded plasmid DNA is transferred to the secretion system. The last 37 residues are important for determining plasmid specificity and transfer efficiency, with additional specificity conferred by the TraD-TraM pair. The protein is Coupling protein TraD (traD) of Escherichia coli (strain K12).